The primary structure comprises 161 residues: Phosphopantetheine adenylyltransferase (161 aa).

Position 9 (S9) interacts with substrate. ATP-binding positions include S9 to F10 and H17. The substrate site is built by K41, L73, and R87. ATP is bound by residues G88 to R90, E98, and Y123 to S129.

The protein belongs to the bacterial CoaD family. In terms of assembly, homohexamer. It depends on Mg(2+) as a cofactor.

It is found in the cytoplasm. The catalysed reaction is (R)-4'-phosphopantetheine + ATP + H(+) = 3'-dephospho-CoA + diphosphate. It participates in cofactor biosynthesis; coenzyme A biosynthesis; CoA from (R)-pantothenate: step 4/5. In terms of biological role, reversibly transfers an adenylyl group from ATP to 4'-phosphopantetheine, yielding dephospho-CoA (dPCoA) and pyrophosphate. The protein is Phosphopantetheine adenylyltransferase of Syntrophomonas wolfei subsp. wolfei (strain DSM 2245B / Goettingen).